Reading from the N-terminus, the 1201-residue chain is Kinesin-like protein costa (1201 aa).

In terms of domain architecture, Kinesin motor spans P4 to V391. The disordered stretch occupies residues S23 to Y92. A compositionally biased stretch (basic and acidic residues) spans E28–N56. The span at P57–D75 shows a compositional bias: polar residues. G175–S182 provides a ligand contact to ATP. 3 disordered regions span residues A502–D536, H565–L606, and A618–S639. A compositionally biased stretch (low complexity) spans S510–D521. Phosphoserine is present on residues S599 and S605. 2 coiled-coil regions span residues A652 to K821 and T968 to L1001.

Belongs to the TRAFAC class myosin-kinesin ATPase superfamily. Kinesin family. KIF27 subfamily. Homodimer (Potential). Binds microtubules. Interacts with ci, smo, sgg, CkIalpha and protein kinase A catalytic subunit. Interacts (via kinesin motor domain) with Ubr3. Polyubiquitinated by Ubr3, which leads to proteasomal degradation.

The protein localises to the cytoplasm. The protein resides in the cytoskeleton. Regulates cubitus interruptus (ci) processing by recruiting multiple kinases to promote its efficient phosphorylation. Scaffolds multiple kinases and ci into proximity to promote its hyperphosphorylation, which then targets it for SCFSlimb/proteasome-mediated processing to generate its repressor form. Hh signaling inhibits ci phosphorylation by interfering with the cos-ci-kinases complex formation. Negatively regulates hh-signaling pathways during various processes, including photoreceptor differentiation. May negatively regulate a hh-signaling pathway which functions in the intestinal immune response to bacterial uracil by activating the Duox-dependent production of reactive oxygen species (ROS). This is Kinesin-like protein costa (cos) from Drosophila melanogaster (Fruit fly).